A 745-amino-acid chain; its full sequence is 1,4-alpha-glucan branching enzyme GlgB (745 aa).

Asp416 functions as the Nucleophile in the catalytic mechanism. Glu469 functions as the Proton donor in the catalytic mechanism.

The protein belongs to the glycosyl hydrolase 13 family. GlgB subfamily. In terms of assembly, monomer.

The catalysed reaction is Transfers a segment of a (1-&gt;4)-alpha-D-glucan chain to a primary hydroxy group in a similar glucan chain.. It functions in the pathway glycan biosynthesis; glycogen biosynthesis. Catalyzes the formation of the alpha-1,6-glucosidic linkages in glycogen by scission of a 1,4-alpha-linked oligosaccharide from growing alpha-1,4-glucan chains and the subsequent attachment of the oligosaccharide to the alpha-1,6 position. The sequence is that of 1,4-alpha-glucan branching enzyme GlgB from Shewanella sp. (strain MR-7).